The sequence spans 397 residues: MIQHIRKFLQLESASGILLLTFAMFAMLFANTPLKDLYFDFLSMPVSIQIGLFSIYKPLLMWVNDGFMAVFFVLIGLEVKREMMVGAISNYQRAIFPAIGALGGMIVPALVFTLINNDSPEFQQGWAIPMATDIAFALGVLGLLGKRVPFALKIFLLALAIIDDLGAIVVIAIFFSHELSTTALISAAIAIAVLIIMNRMRVTAICAYMVVGLILWASVLKSGVHATLAGVIIGFCVPLKGKNGEEPLAHFEHLLAPWCSFVILPLFAFSNAGVSLAGMSLSTLFSPLTMGVALGLLVGKTLGVFSFSFLAVKLGIAQLSEGINFKQIFAVSVLCGIGFTMSMFLAGLAFGGDEADGQFISLARLGILIGSGISAVLGYYLLKLCTMPNIHINNLSK.

12 helical membrane-spanning segments follow: residues 14 to 34, 36 to 56, 59 to 79, 95 to 115, 125 to 145, 154 to 174, 177 to 197, 204 to 224, 254 to 274, 292 to 312, 328 to 348, and 365 to 385; these read ASGI…NTPL, DLYF…FSIY, LLMW…GLEV, IFPA…FTLI, GWAI…GLLG, IFLL…IAIF, HELS…LIIM, AICA…KSGV, LLAP…NAGV, VALG…FLAV, IFAV…LAGL, and LGIL…LKLC.

This sequence belongs to the NhaA Na(+)/H(+) (TC 2.A.33) antiporter family.

The protein localises to the cell inner membrane. The enzyme catalyses Na(+)(in) + 2 H(+)(out) = Na(+)(out) + 2 H(+)(in). Functionally, na(+)/H(+) antiporter that extrudes sodium in exchange for external protons. This is Na(+)/H(+) antiporter NhaA from Glaesserella parasuis serovar 5 (strain SH0165) (Haemophilus parasuis).